We begin with the raw amino-acid sequence, 408 residues long: Imidazolonepropionase (408 aa).

Residues His-73 and His-75 each contribute to the Fe(3+) site. 2 residues coordinate Zn(2+): His-73 and His-75. Positions 82, 145, and 178 each coordinate 4-imidazolone-5-propanoate. Residue Tyr-145 coordinates N-formimidoyl-L-glutamate. A Fe(3+)-binding site is contributed by His-243. Zn(2+) is bound at residue His-243. 4-imidazolone-5-propanoate is bound at residue Gln-246. Asp-318 contacts Fe(3+). Position 318 (Asp-318) interacts with Zn(2+). Residues Asn-320 and Gly-322 each coordinate N-formimidoyl-L-glutamate. Ser-323 contributes to the 4-imidazolone-5-propanoate binding site.

Belongs to the metallo-dependent hydrolases superfamily. HutI family. The cofactor is Zn(2+). Fe(3+) is required as a cofactor.

It localises to the cytoplasm. It carries out the reaction 4-imidazolone-5-propanoate + H2O = N-formimidoyl-L-glutamate. Its pathway is amino-acid degradation; L-histidine degradation into L-glutamate; N-formimidoyl-L-glutamate from L-histidine: step 3/3. Catalyzes the hydrolytic cleavage of the carbon-nitrogen bond in imidazolone-5-propanoate to yield N-formimidoyl-L-glutamate. It is the third step in the universal histidine degradation pathway. The sequence is that of Imidazolonepropionase from Shewanella baltica (strain OS155 / ATCC BAA-1091).